The chain runs to 831 residues: Translation initiation factor IF-2 (831 aa).

The tract at residues 116-157 (IEPLETDKEVEQKQQNTEENKVEVSAKIVQDDEDIPSQIPKK) is disordered. The span at 117–139 (EPLETDKEVEQKQQNTEENKVEV) shows a compositional bias: basic and acidic residues. The region spanning 329–499 (TRAPVVTVMG…LLIAEMQDLK (171 aa)) is the tr-type G domain. Residues 338–345 (GHVDHGKT) form a G1 region. Position 338 to 345 (338 to 345 (GHVDHGKT)) interacts with GTP. Positions 363 to 367 (GITQH) are G2. The segment at 385–388 (DTPG) is G3. Residues 385 to 389 (DTPGH) and 439 to 442 (NKID) each bind GTP. The segment at 439-442 (NKID) is G4. A G5 region spans residues 475–477 (SAL).

It belongs to the TRAFAC class translation factor GTPase superfamily. Classic translation factor GTPase family. IF-2 subfamily.

Its subcellular location is the cytoplasm. Its function is as follows. One of the essential components for the initiation of protein synthesis. Protects formylmethionyl-tRNA from spontaneous hydrolysis and promotes its binding to the 30S ribosomal subunits. Also involved in the hydrolysis of GTP during the formation of the 70S ribosomal complex. In Rickettsia conorii (strain ATCC VR-613 / Malish 7), this protein is Translation initiation factor IF-2.